A 370-amino-acid chain; its full sequence is Molybdenum import ATP-binding protein ModC (370 aa).

Residues 1-232 (MLDIDVLRQQ…PDIPDFAAQR (232 aa)) enclose the ABC transporter domain. 30-37 (GRSGAGKT) contacts ATP. The 72-residue stretch at 292–363 (MVSVQNILAA…IKAMSLLRDE (72 aa)) folds into the Mop domain.

This sequence belongs to the ABC transporter superfamily. Molybdate importer (TC 3.A.1.8) family. In terms of assembly, the complex is composed of two ATP-binding proteins (ModC), two transmembrane proteins (ModB) and a solute-binding protein (ModA).

It localises to the cell inner membrane. It catalyses the reaction molybdate(out) + ATP + H2O = molybdate(in) + ADP + phosphate + H(+). In terms of biological role, part of the ABC transporter complex ModABC involved in molybdenum import. Responsible for energy coupling to the transport system. The chain is Molybdenum import ATP-binding protein ModC from Rhodospirillum rubrum (strain ATCC 11170 / ATH 1.1.1 / DSM 467 / LMG 4362 / NCIMB 8255 / S1).